Reading from the N-terminus, the 350-residue chain is Variable large protein 4 (350 aa).

The signal sequence occupies residues 1–18 (MRRRISAIIMTLFMVLVS). The N-palmitoyl cysteine moiety is linked to residue Cys19. A lipid anchor (S-diacylglycerol cysteine) is attached at Cys19.

Belongs to the variable large protein (Vlp) family. Delta subfamily.

It localises to the cell outer membrane. In terms of biological role, the Vlp and Vsp proteins are antigenically distinct proteins, only one vlp or vsp gene is transcriptionally active at any one time. Switching between these genes is a mechanism of host immune response evasion. The chain is Variable large protein 4 from Borrelia hermsii.